The following is a 696-amino-acid chain: HIPL2 protein (696 aa).

The signal sequence occupies residues 1-24 (MAKTNQAITICSLLLLLLLSETTS). 14 N-linked (GlcNAc...) asparagine glycosylation sites follow: Asn-38, Asn-69, Asn-74, Asn-108, Asn-124, Asn-148, Asn-175, Asn-339, Asn-431, Asn-513, Asn-519, Asn-528, Asn-581, and Asn-651. The GPI-anchor amidated serine moiety is linked to residue Ser-672. The propeptide at 673–696 (SARKLCFSVFLLLSLLMMFLTLLD) is removed in mature form.

This sequence belongs to the PQQ oxidoreductase GdhB family. Pyrroloquinoline quinone serves as cofactor.

The protein localises to the cell membrane. The sequence is that of HIPL2 protein (HIPL2) from Arabidopsis thaliana (Mouse-ear cress).